We begin with the raw amino-acid sequence, 254 residues long: NAD-dependent protein deacylase 2 (254 aa).

In terms of domain architecture, Deacetylase sirtuin-type spans Met1 to Val254. Gly24–Trp44 contributes to the NAD(+) binding site. Residues Tyr69 and Arg72 each coordinate substrate. Gln105–Asp108 is a binding site for NAD(+). The active-site Proton acceptor is His123. Residues Cys131, Cys134, Cys157, and Cys160 each contribute to the Zn(2+) site. NAD(+) is bound by residues Gly197–Ser199 and Ala241.

The protein belongs to the sirtuin family. Class III subfamily. Requires Zn(2+) as cofactor.

Its subcellular location is the cytoplasm. The catalysed reaction is N(6)-acetyl-L-lysyl-[protein] + NAD(+) + H2O = 2''-O-acetyl-ADP-D-ribose + nicotinamide + L-lysyl-[protein]. The enzyme catalyses N(6)-succinyl-L-lysyl-[protein] + NAD(+) + H2O = 2''-O-succinyl-ADP-D-ribose + nicotinamide + L-lysyl-[protein]. Functionally, NAD-dependent lysine deacetylase and desuccinylase that specifically removes acetyl and succinyl groups on target proteins. Modulates the activities of several proteins which are inactive in their acylated form. The chain is NAD-dependent protein deacylase 2 from Corynebacterium efficiens (strain DSM 44549 / YS-314 / AJ 12310 / JCM 11189 / NBRC 100395).